The following is a 290-amino-acid chain: 33 kDa chaperonin (290 aa).

2 disulfide bridges follow: cysteine 235–cysteine 237 and cysteine 268–cysteine 271.

It belongs to the HSP33 family. In terms of processing, under oxidizing conditions two disulfide bonds are formed involving the reactive cysteines. Under reducing conditions zinc is bound to the reactive cysteines and the protein is inactive.

The protein resides in the cytoplasm. Redox regulated molecular chaperone. Protects both thermally unfolding and oxidatively damaged proteins from irreversible aggregation. Plays an important role in the bacterial defense system toward oxidative stress. In Streptococcus pyogenes serotype M4 (strain MGAS10750), this protein is 33 kDa chaperonin.